We begin with the raw amino-acid sequence, 83 residues long: Cytochrome b559 subunit alpha (83 aa).

The helical transmembrane segment at valine 21 to tryptophan 35 threads the bilayer. Histidine 23 serves as a coordination point for heme.

Belongs to the PsbE/PsbF family. In terms of assembly, heterodimer of an alpha subunit and a beta subunit. PSII is composed of 1 copy each of membrane proteins PsbA, PsbB, PsbC, PsbD, PsbE, PsbF, PsbH, PsbI, PsbJ, PsbK, PsbL, PsbM, PsbT, PsbX, PsbY, PsbZ, Psb30/Ycf12, at least 3 peripheral proteins of the oxygen-evolving complex and a large number of cofactors. It forms dimeric complexes. Heme b serves as cofactor.

The protein resides in the plastid. It is found in the chloroplast thylakoid membrane. Its function is as follows. This b-type cytochrome is tightly associated with the reaction center of photosystem II (PSII). PSII is a light-driven water:plastoquinone oxidoreductase that uses light energy to abstract electrons from H(2)O, generating O(2) and a proton gradient subsequently used for ATP formation. It consists of a core antenna complex that captures photons, and an electron transfer chain that converts photonic excitation into a charge separation. The chain is Cytochrome b559 subunit alpha from Phalaenopsis aphrodite subsp. formosana (Moth orchid).